Here is a 394-residue protein sequence, read N- to C-terminus: Xylose isomerase (394 aa).

Residues His-54 and Asp-57 contribute to the active site. Glu-180, Glu-216, His-219, Asp-244, Asp-254, Asp-256, and Asp-285 together coordinate Mg(2+). The interval 370-394 (VRTPRPAGDGPPAGRARLTVAPRKR) is disordered. The span at 373-386 (PRPAGDGPPAGRAR) shows a compositional bias: low complexity.

Belongs to the xylose isomerase family. As to quaternary structure, homotetramer. Requires Mg(2+) as cofactor.

It localises to the cytoplasm. The catalysed reaction is alpha-D-xylose = alpha-D-xylulofuranose. Involved in D-xylose catabolism. This chain is Xylose isomerase (xylA), found in Streptomyces rochei (Streptomyces parvullus).